The primary structure comprises 642 residues: Threonine--tRNA ligase (642 aa).

The region spanning 1-61 (MPVITLPDGS…ENDATLSIIT (61 aa)) is the TGS domain. Positions 243–534 (DHRKIGKQLD…LTEEFAGFFP (292 aa)) are catalytic. Positions 334, 385, and 511 each coordinate Zn(2+).

This sequence belongs to the class-II aminoacyl-tRNA synthetase family. Homodimer. It depends on Zn(2+) as a cofactor.

It localises to the cytoplasm. It carries out the reaction tRNA(Thr) + L-threonine + ATP = L-threonyl-tRNA(Thr) + AMP + diphosphate + H(+). Catalyzes the attachment of threonine to tRNA(Thr) in a two-step reaction: L-threonine is first activated by ATP to form Thr-AMP and then transferred to the acceptor end of tRNA(Thr). Also edits incorrectly charged L-seryl-tRNA(Thr). The protein is Threonine--tRNA ligase of Salmonella paratyphi A (strain ATCC 9150 / SARB42).